Reading from the N-terminus, the 101-residue chain is Small ribosomal subunit protein uS14 (101 aa).

The span at 1-10 (MAKKSSIEKN) shows a compositional bias: basic and acidic residues. A disordered region spans residues 1–24 (MAKKSSIEKNNRRKRLTKNAAPKR). Over residues 11 to 24 (NRRKRLTKNAAPKR) the composition is skewed to basic residues.

It belongs to the universal ribosomal protein uS14 family. In terms of assembly, part of the 30S ribosomal subunit. Contacts proteins S3 and S10.

Binds 16S rRNA, required for the assembly of 30S particles and may also be responsible for determining the conformation of the 16S rRNA at the A site. The polypeptide is Small ribosomal subunit protein uS14 (Rhodopseudomonas palustris (strain BisB18)).